The following is a 947-amino-acid chain: Bromodomain testis-specific protein (947 aa).

Positions 27–133 (RLTNQLQYLQ…KLFMQKLSQM (107 aa)) constitute a Bromo 1 domain. N109 contacts JQ1. S187 bears the Phosphoserine mark. A disordered region spans residues 202-228 (QTAAQVTKGVKRKADTTTPATSAVKAS). The Nuclear localization signal signature appears at 209-220 (KGVKRKADTTTP). Polar residues predominate over residues 217-228 (TTTPATSAVKAS). Residues 267–376 (VKVTEQLRHC…DVFETHFSKI (110 aa)) enclose the Bromo 2 domain. Disordered regions lie at residues 395–420 (ETTG…DERV), 444–511 (PFRK…KPMN), 610–698 (NNQL…IPPE), and 882–924 (NKCS…RRRE). Residues 417–470 (DERVKRLAKLQEQLKAVHQQLQVLSQVPFRKLNKKKEKSKKEKKKEKVNNSNEN) adopt a coiled-coil conformation. Residues 447–462 (KLNKKKEKSKKEKKKE) show a composition bias toward basic residues. Residues 470–481 (NPRKMCEQMRLK) show a composition bias toward basic and acidic residues. Basic residues predominate over residues 482-494 (EKSKRNQPKKRKQ). In terms of domain architecture, NET spans 500-582 (KSEDEDNAKP…ACLRKRPLKP (83 aa)). A coiled-coil region spans residues 591-621 (KEELHSQKKQELEKRLLDVNNQLNSRKRQTK). Positions 637 to 662 (LSESSSSSSSSSESESSSSDLSSSDS) are enriched in low complexity. Composition is skewed to basic and acidic residues over residues 674 to 692 (TEVK…KMKN) and 885 to 924 (SGEE…RRRE).

Belongs to the BET family. Interacts with mRNA splicing machinery proteins SRSF2, DDX5, HNRNPK and TARDBP. Interacts with the acetylated N-terminus of histone H1, H2, H3 and H4. Interacts with P-TEFb components CDK9 and CCNT1/cyclin-T1. Interacts with SMARCE1. Interacts with the acetylated N-terminus of histone H1.4, H2A, H2B, H3 and H4. In terms of processing, ubiquitinated in a SPOP-dependent manner, leading to proteasomal degradation. As to expression, testis-specific. A 3-fold higher expression is seen in adult testis than in embryo testis. Expression seems to be correlated with histone H4 hyperacetylation during the haploid phase of spermatogenesis (spermiogenesis). No expression, or very low expression is seen in patients' testes with abnormal spermatogenesis. Expressed in cancers such as non-small cell lung cancer and squamous cell carcinomas of the head and neck as well as of esophagus, but not in melanoma or in cancers of the colon, breast, kidney and bladder.

Its subcellular location is the nucleus. In terms of biological role, testis-specific chromatin protein that specifically binds histone H4 acetylated at 'Lys-5' and 'Lys-8' (H4K5ac and H4K8ac, respectively) and plays a key role in spermatogenesis. Required in late pachytene spermatocytes: plays a role in meiotic and post-meiotic cells by binding to acetylated histones at the promoter of specific meiotic and post-meiotic genes, facilitating their activation at the appropriate time. In the post-meiotic phase of spermatogenesis, binds to hyperacetylated histones and participates in their general removal from DNA. Also recognizes and binds a subset of butyrylated histones: able to bind histone H4 butyrylated at 'Lys-8' (H4K8ac), while it is not able to bind H4 butyrylated at 'Lys-5' (H4K5ac). Also acts as a component of the splicing machinery in pachytene spermatocytes and round spermatids and participates in 3'-UTR truncation of specific mRNAs in post-meiotic spermatids. Required for chromocenter organization, a structure comprised of peri-centromeric heterochromatin. In Homo sapiens (Human), this protein is Bromodomain testis-specific protein (BRDT).